The primary structure comprises 349 residues: 1-acylglycerol-3-phosphate O-acyltransferase ABHD5 (349 aa).

N-acetylalanine is present on Ala2. An AB hydrolase-1 domain is found at 77-185; that stretch reads PLVLLHGFGG…VEPWGFPERP (109 aa). Positions 327–332 match the HXXXXD motif motif; that stretch reads HYVYAD.

Belongs to the peptidase S33 family. ABHD4/ABHD5 subfamily. Interacts with ADRP, PLIN and PNPLA2. Interacts with PLIN5; promotes interaction with PNPLA2.

The protein resides in the cytoplasm. The protein localises to the lipid droplet. It catalyses the reaction a 1-acyl-sn-glycero-3-phosphate + an acyl-CoA = a 1,2-diacyl-sn-glycero-3-phosphate + CoA. The enzyme catalyses 1-(9Z-octadecenoyl)-sn-glycero-3-phosphate + (9Z)-octadecenoyl-CoA = 1,2-di-(9Z-octadecenoyl)-sn-glycero-3-phosphate + CoA. The catalysed reaction is 1-(9Z-octadecenoyl)-sn-glycero-3-phosphate + hexadecanoyl-CoA = 1-(9Z)-octadecenoyl-2-hexadecanoyl-sn-glycero-3-phosphate + CoA. It carries out the reaction 1-(9Z-octadecenoyl)-sn-glycero-3-phosphate + octadecanoyl-CoA = 1-(9Z-octadecenoyl)-2-octadecanoyl-sn-glycero-3-phosphate + CoA. It catalyses the reaction 1-(9Z-octadecenoyl)-sn-glycero-3-phosphate + (5Z,8Z,11Z,14Z)-eicosatetraenoyl-CoA = 1-(9Z)-octadecenoyl-2-(5Z,8Z,11Z,14Z)-eicosatetraenoyl-sn-glycero-3-phosphate + CoA. The enzyme catalyses eicosanoyl-CoA + 1-(9Z-octadecenoyl)-sn-glycero-3-phosphate = 1-(9Z)-octadecenoyl-2-eicosanoyl-sn-glycero-3-phosphate + CoA. The catalysed reaction is 1-hexadecanoyl-sn-glycero-3-phosphate + (9Z)-octadecenoyl-CoA = 1-hexadecanoyl-2-(9Z-octadecenoyl)-sn-glycero-3-phosphate + CoA. It carries out the reaction 1-octadecanoyl-sn-glycero-3-phosphate + (9Z)-octadecenoyl-CoA = 1-octadecanoyl-2-(9Z-octadecenoyl)-sn-glycero-3-phosphate + CoA. It catalyses the reaction 1-(5Z,8Z,11Z,14Z-eicosatetraenoyl)-sn-glycero-3-phosphate + (9Z)-octadecenoyl-CoA = 1-(5Z,8Z,11Z,14Z)-eicosatetraenoyl-2-(9Z)-octadecenoyl-sn-glycero-3-phosphate + CoA. Its activity is regulated as follows. Acyltransferase activity is inhibited by detergents such as Triton X-100 and 3-[(3-cholamidopropyl)dimethylammonio]-1-propanesulfonate (CHAPS). Acyltransferase activity is inhibited by the presence of magnesium and calcium. Its function is as follows. Coenzyme A-dependent lysophosphatidic acid acyltransferase that catalyzes the transfer of an acyl group on a lysophosphatidic acid. Functions preferentially with 1-oleoyl-lysophosphatidic acid followed by 1-palmitoyl-lysophosphatidic acid, 1-stearoyl-lysophosphatidic acid and 1-arachidonoyl-lysophosphatidic acid as lipid acceptor. Functions preferentially with arachidonoyl-CoA followed by oleoyl-CoA as acyl group donors. Functions in phosphatidic acid biosynthesis. May regulate the cellular storage of triacylglycerol through activation of the phospholipase PNPLA2. Involved in keratinocyte differentiation. Regulates lipid droplet fusion. In Sus scrofa (Pig), this protein is 1-acylglycerol-3-phosphate O-acyltransferase ABHD5.